A 168-amino-acid polypeptide reads, in one-letter code: uncharacterized protein (168 aa).

Transmembrane regions (helical) follow at residues 1-21, 41-61, 68-88, and 123-143; these read MFWLLIAILIVQRAAEMAVAR, PYIITMHILFFLSLIAEVLLM, WWLGIAAVILSVQIVRYWALC, and VILEILLIPLLYQAYVTMCLF.

It is found in the cell membrane. This is an uncharacterized protein from Bacillus subtilis (strain 168).